Consider the following 172-residue polypeptide: Adenylate kinase isoenzyme 6 (172 aa).

ATP is bound by residues glycine 13, glycine 15, lysine 16, threonine 17, and threonine 18. An NMPbind region spans residues 33–56 (NVGDLAREGQLYDGYDEEYDCPIL). The interval 108–118 (NRGYNEKKLKD) is LID. ATP contacts are provided by arginine 109 and lysine 148.

This sequence belongs to the adenylate kinase family. AK6 subfamily. In terms of assembly, monomer and homodimer. Interacts with small ribosomal subunit protein uS11. Not a structural component of 43S pre-ribosomes, but transiently interacts with them by binding to uS11. Interacts with COIL (via C-terminus).

Its subcellular location is the cytoplasm. The protein localises to the nucleus. The protein resides in the nucleoplasm. It localises to the cajal body. The catalysed reaction is AMP + ATP = 2 ADP. The enzyme catalyses ATP + H2O = ADP + phosphate + H(+). Its function is as follows. Broad-specificity nucleoside monophosphate (NMP) kinase that catalyzes the reversible transfer of the terminal phosphate group between nucleoside triphosphates and monophosphates. Also has ATPase activity. Involved in the late cytoplasmic maturation steps of the 40S ribosomal particles, specifically 18S rRNA maturation. While NMP activity is not required for ribosome maturation, ATPase activity is. Associates transiently with small ribosomal subunit protein uS11. ATP hydrolysis breaks the interaction with uS11. May temporarily remove uS11 from the ribosome to enable a conformational change of the ribosomal RNA that is needed for the final maturation step of the small ribosomal subunit. Its NMP activity may have a role in nuclear energy homeostasis. May be involved in regulation of Cajal body (CB) formation. This is Adenylate kinase isoenzyme 6 from Bos taurus (Bovine).